The chain runs to 132 residues: Small ribosomal subunit protein uS8 (132 aa).

The protein belongs to the universal ribosomal protein uS8 family. Part of the 30S ribosomal subunit. Contacts proteins S5 and S12.

In terms of biological role, one of the primary rRNA binding proteins, it binds directly to 16S rRNA central domain where it helps coordinate assembly of the platform of the 30S subunit. This is Small ribosomal subunit protein uS8 from Flavobacterium johnsoniae (strain ATCC 17061 / DSM 2064 / JCM 8514 / BCRC 14874 / CCUG 350202 / NBRC 14942 / NCIMB 11054 / UW101) (Cytophaga johnsonae).